Reading from the N-terminus, the 670-residue chain is DNA ligase (670 aa).

Residues 32–36 (DAEYD), 81–82 (SL), and Glu-110 contribute to the NAD(+) site. Lys-112 functions as the N6-AMP-lysine intermediate in the catalytic mechanism. NAD(+)-binding residues include Arg-133, Glu-170, Lys-289, and Lys-313. Residues Cys-407, Cys-410, Cys-425, and Cys-431 each contribute to the Zn(2+) site. A BRCT domain is found at 590–670 (ESQLSLKGQT…ALMDLLNAAN (81 aa)).

The protein belongs to the NAD-dependent DNA ligase family. LigA subfamily. Mg(2+) is required as a cofactor. The cofactor is Mn(2+).

The catalysed reaction is NAD(+) + (deoxyribonucleotide)n-3'-hydroxyl + 5'-phospho-(deoxyribonucleotide)m = (deoxyribonucleotide)n+m + AMP + beta-nicotinamide D-nucleotide.. DNA ligase that catalyzes the formation of phosphodiester linkages between 5'-phosphoryl and 3'-hydroxyl groups in double-stranded DNA using NAD as a coenzyme and as the energy source for the reaction. It is essential for DNA replication and repair of damaged DNA. This chain is DNA ligase, found in Shewanella frigidimarina (strain NCIMB 400).